Consider the following 204-residue polypeptide: Altered inheritance of mitochondria protein 20 (204 aa).

Residues 6-26 (VAVGTAVGIPIAVGVIIALIF) traverse the membrane as a helical segment.

Belongs to the SKG1 family.

It localises to the vacuole membrane. Its function is as follows. Involved in cell cycle progression and surviving DNA damage. The sequence is that of Altered inheritance of mitochondria protein 20 (AIM20) from Saccharomyces cerevisiae (strain JAY291) (Baker's yeast).